The chain runs to 620 residues: 1-deoxy-D-xylulose-5-phosphate synthase (620 aa).

Residues His-80 and 121–123 contribute to the thiamine diphosphate site; that span reads GHS. Mg(2+) is bound at residue Asp-152. Thiamine diphosphate-binding positions include 153–154, Asn-181, Tyr-288, and Glu-370; that span reads GA. Asn-181 lines the Mg(2+) pocket.

This sequence belongs to the transketolase family. DXPS subfamily. In terms of assembly, homodimer. The cofactor is Mg(2+). Thiamine diphosphate is required as a cofactor.

It catalyses the reaction D-glyceraldehyde 3-phosphate + pyruvate + H(+) = 1-deoxy-D-xylulose 5-phosphate + CO2. It participates in metabolic intermediate biosynthesis; 1-deoxy-D-xylulose 5-phosphate biosynthesis; 1-deoxy-D-xylulose 5-phosphate from D-glyceraldehyde 3-phosphate and pyruvate: step 1/1. Catalyzes the acyloin condensation reaction between C atoms 2 and 3 of pyruvate and glyceraldehyde 3-phosphate to yield 1-deoxy-D-xylulose-5-phosphate (DXP). The polypeptide is 1-deoxy-D-xylulose-5-phosphate synthase (Shigella dysenteriae serotype 1 (strain Sd197)).